The chain runs to 336 residues: Anthranilate phosphoribosyltransferase (336 aa).

5-phospho-alpha-D-ribose 1-diphosphate-binding positions include glycine 81, glycine 84–aspartate 85, serine 89, asparagine 91–threonine 94, lysine 109–serine 117, and alanine 121. An anthranilate-binding site is contributed by glycine 81. Residue serine 93 coordinates Mg(2+). Anthranilate is bound at residue asparagine 112. Arginine 167 serves as a coordination point for anthranilate. Residues aspartate 225 and glutamate 226 each coordinate Mg(2+).

The protein belongs to the anthranilate phosphoribosyltransferase family. As to quaternary structure, homodimer. Mg(2+) serves as cofactor.

It catalyses the reaction N-(5-phospho-beta-D-ribosyl)anthranilate + diphosphate = 5-phospho-alpha-D-ribose 1-diphosphate + anthranilate. It functions in the pathway amino-acid biosynthesis; L-tryptophan biosynthesis; L-tryptophan from chorismate: step 2/5. Functionally, catalyzes the transfer of the phosphoribosyl group of 5-phosphorylribose-1-pyrophosphate (PRPP) to anthranilate to yield N-(5'-phosphoribosyl)-anthranilate (PRA). The protein is Anthranilate phosphoribosyltransferase of Mesorhizobium japonicum (strain LMG 29417 / CECT 9101 / MAFF 303099) (Mesorhizobium loti (strain MAFF 303099)).